The following is a 344-amino-acid chain: Nuclear distribution protein nudE homolog 1 (344 aa).

The segment at Met1–Ile93 is self-association. Positions Trp18–Lys188 form a coiled coil. Residues Glu88–Leu156 are interaction with PAFAH1B1. The interval Gln167 to Ala290 is interaction with CENPF. Residues Ala181–Thr246 form a disordered region. Ser211 carries the post-translational modification Phosphoserine. Residues Thr215 and Thr228 each carry the phosphothreonine modification. Residue Ser239 is modified to Phosphoserine. Residues Thr243 and Thr246 each carry the phosphothreonine modification. Cys274 carries the S-palmitoyl cysteine; by ZDHHC2, ZDHHC3 and ZDHHC7 lipid modification. Over residues Tyr279–Pro289 the composition is skewed to polar residues. Positions Tyr279–Gln337 are disordered. Ser282 is subject to Phosphoserine. Basic and acidic residues predominate over residues Lys296 to Pro305. At Ser309 the chain carries Phosphoserine. Low complexity predominate over residues Pro324–Ala336.

The protein belongs to the nudE family. In terms of assembly, homodimer. Interacts with dynactin and PCM1. Interacts with CENPF, LIS1, CNTRL, dynein, tubulin gamma, PAFAH1B1, PCNT, SLMAP and TCP1. Interacts with ZNF365. Interacts with RAB9A; the interaction leads to RAB9A-dynein motor tethering. Interacts (via C-terminus) with MCRS1 (via C-terminus); phosphorylation of NDE1 inhibits the interaction. Phosphorylated in mitosis. Phosphorylation at Thr-246 is essential for the G2/M transition. Highly expressed in ovary. Also expressed in brain, heart, kidney, large intestine, liver, lung, small intestine and testis.

Its subcellular location is the cytoplasm. It localises to the cytoskeleton. The protein localises to the microtubule organizing center. The protein resides in the centrosome. It is found in the spindle. Its subcellular location is the chromosome. It localises to the centromere. The protein localises to the kinetochore. The protein resides in the cleavage furrow. It is found in the cytoplasmic vesicle membrane. In terms of biological role, required for centrosome duplication and formation and function of the mitotic spindle. Essential for the development of the cerebral cortex. May regulate the production of neurons by controlling the orientation of the mitotic spindle during division of cortical neuronal progenitors of the proliferative ventricular zone of the brain. Orientation of the division plane perpendicular to the layers of the cortex gives rise to two proliferative neuronal progenitors whereas parallel orientation of the division plane yields one proliferative neuronal progenitor and a postmitotic neuron. A premature shift towards a neuronal fate within the progenitor population may result in an overall reduction in the final number of neurons and an increase in the number of neurons in the deeper layers of the cortex. Acts as a RAB9A/B effector that tethers RAB9-associated late endosomes to the dynein motor for their retrograde transport to the trans-Golgi network. The protein is Nuclear distribution protein nudE homolog 1 of Mus musculus (Mouse).